Consider the following 39-residue polypeptide: Cytochrome b6-f complex subunit 5 (39 aa).

Residues 5 to 25 (LLCGIVLGLVPITLLGLFVAA) form a helical membrane-spanning segment.

It belongs to the PetG family. The 4 large subunits of the cytochrome b6-f complex are cytochrome b6, subunit IV (17 kDa polypeptide, PetD), cytochrome f and the Rieske protein, while the 4 small subunits are PetG, PetL, PetM and PetN. The complex functions as a dimer.

The protein resides in the cellular thylakoid membrane. Component of the cytochrome b6-f complex, which mediates electron transfer between photosystem II (PSII) and photosystem I (PSI), cyclic electron flow around PSI, and state transitions. PetG is required for either the stability or assembly of the cytochrome b6-f complex. The polypeptide is Cytochrome b6-f complex subunit 5 (Prochlorococcus marinus (strain SARG / CCMP1375 / SS120)).